A 411-amino-acid polypeptide reads, in one-letter code: 2,3-bisphosphoglycerate-independent phosphoglycerate mutase (411 aa).

A disordered region spans residues Val164–Lys190.

Belongs to the BPG-independent phosphoglycerate mutase family. A-PGAM subfamily.

It catalyses the reaction (2R)-2-phosphoglycerate = (2R)-3-phosphoglycerate. Its pathway is carbohydrate degradation; glycolysis; pyruvate from D-glyceraldehyde 3-phosphate: step 3/5. In terms of biological role, catalyzes the interconversion of 2-phosphoglycerate and 3-phosphoglycerate. In Methanoculleus marisnigri (strain ATCC 35101 / DSM 1498 / JR1), this protein is 2,3-bisphosphoglycerate-independent phosphoglycerate mutase.